Consider the following 143-residue polypeptide: Anti-sigma F factor (143 aa).

Belongs to the anti-sigma-factor family.

The enzyme catalyses L-seryl-[protein] + ATP = O-phospho-L-seryl-[protein] + ADP + H(+). It catalyses the reaction L-threonyl-[protein] + ATP = O-phospho-L-threonyl-[protein] + ADP + H(+). In terms of biological role, binds to sigma F and blocks its ability to form an RNA polymerase holoenzyme (E-sigma F). Phosphorylates SpoIIAA on a serine residue. This phosphorylation may enable SpoIIAA to act as an anti-anti-sigma factor that counteracts SpoIIAB and thus releases sigma F from inhibition. The chain is Anti-sigma F factor from Clostridium beijerinckii (strain ATCC 51743 / NCIMB 8052) (Clostridium acetobutylicum).